Consider the following 608-residue polypeptide: MMEQVCDVFDIYAICACCKVESKNEGKKNEVFNNYTFRGLGNKGVLPWKCNSLDMKYFRAVTTYVNESKYEKLKYKRCKYLNKETVDNVNDMPNSKKLQNVVVMGRTNWESIPKKFKPLSNRINVILSRTLKKEDFDEDVYIINKVEDLIVLLGKLNYYKCFIIGGSVVYQEFLEKKLIKKIYFTRINSTYECDVFFPEINENEYQIISVSDVYTSNNTTLDFIIYKKTNNKMLNEQNCIKGEEKNNDMPLKNDDKDTCHMKKLTEFYKNVDKYKINYENDDDDEEEDDFVYFNFNKEKEEKNKNSIHPNDFQIYNSLKYKYHPEYQYLNIIYDIMMNGNKQSDRTGVGVLSKFGYIMKFDLSQYFPLLTTKKLFLRGIIEELLWFIRGETNGNTLLNKNVRIWEANGTREFLDNRKLFHREVNDLGPIYGFQWRHFGAEYTNMYDNYENKGVDQLKNIINLIKNDPTSRRILLCAWNVKDLDQMALPPCHILCQFYVFDGKLSCIMYQRSCDLGLGVPFNIASYSIFTHMIAQVCNLQPAQFIHVLGNAHVYNNHIDSLKIQLNRIPYPFPTLKLNPDIKNIEDFTISDFTIQNYVHHEKISMDMAA.

The DHFR domain occupies 10–228; sequence DIYAICACCK…TTLDFIIYKK (219 aa). 14–15 contacts substrate; it reads IC. A16 provides a ligand contact to NADP(+). V31 contributes to the substrate binding site. 39–45 contributes to the NADP(+) binding site; that stretch reads GLGNKGV. Substrate-binding residues include D54 and N108. NADP(+) contacts are provided by residues 106–108, 128–130, and N144; these read RTN and SRT. Substrate-binding residues include I164, Y170, and T185. 165-172 serves as a coordination point for NADP(+); it reads GGSVVYQE. The tract at residues 322–608 is thymidylate synthase; sequence YHPEYQYLNI…HEKISMDMAA (287 aa). R345 is a binding site for dUMP. C490 is a catalytic residue. DUMP is bound by residues H491, 509-513, N521, and 551-553; these read QRSCD and HVY.

In the N-terminal section; belongs to the dihydrofolate reductase family. It in the C-terminal section; belongs to the thymidylate synthase family. As to quaternary structure, homodimer.

The enzyme catalyses (6S)-5,6,7,8-tetrahydrofolate + NADP(+) = 7,8-dihydrofolate + NADPH + H(+). It catalyses the reaction dUMP + (6R)-5,10-methylene-5,6,7,8-tetrahydrofolate = 7,8-dihydrofolate + dTMP. It functions in the pathway cofactor biosynthesis; tetrahydrofolate biosynthesis; 5,6,7,8-tetrahydrofolate from 7,8-dihydrofolate: step 1/1. Its function is as follows. Bifunctional enzyme. Involved in de novo dTMP biosynthesis. Key enzyme in folate metabolism. Catalyzes an essential reaction for de novo glycine and purine synthesis, DNA precursor synthesis, and for the conversion of dUMP to dTMP. The polypeptide is Bifunctional dihydrofolate reductase-thymidylate synthase (Plasmodium falciparum (isolate K1 / Thailand)).